The sequence spans 122 residues: MIQTETMLDVADNSGARRVQCIKVLGGSHRRYASVGDIIKVTVKEAIPRARVKKGDVMNAVVVRTKFGIRRPDGSVIRFDDNAAVILNNNKAPIATRIFGPVTRELRIEQFMKIISLAPEVL.

Belongs to the universal ribosomal protein uL14 family. In terms of assembly, part of the 50S ribosomal subunit. Forms a cluster with proteins L3 and L19. In the 70S ribosome, L14 and L19 interact and together make contacts with the 16S rRNA in bridges B5 and B8.

In terms of biological role, binds to 23S rRNA. Forms part of two intersubunit bridges in the 70S ribosome. The sequence is that of Large ribosomal subunit protein uL14 from Acinetobacter baumannii (strain SDF).